The sequence spans 433 residues: Divergent protein kinase domain 2B (433 aa).

The first 31 residues, 1–31, serve as a signal peptide directing secretion; that stretch reads MEPQLGPEAAALRPGWLALLLWVSALSCSFS. N-linked (GlcNAc...) asparagine glycosylation is present at Asn-100.

This sequence belongs to the DIPK family.

It is found in the secreted. The chain is Divergent protein kinase domain 2B from Homo sapiens (Human).